The chain runs to 192 residues: Guanylate kinase (192 aa).

The Guanylate kinase-like domain maps to 7 to 185; it reads GLIIILSSPS…TLKKIHEIIV (179 aa). Residue 14-21 coordinates ATP; that stretch reads SPSGTGKS.

The protein belongs to the guanylate kinase family.

Its subcellular location is the cytoplasm. The catalysed reaction is GMP + ATP = GDP + ADP. Essential for recycling GMP and indirectly, cGMP. This chain is Guanylate kinase, found in Rickettsia felis (strain ATCC VR-1525 / URRWXCal2) (Rickettsia azadi).